The primary structure comprises 392 residues: Phosphopentomutase (392 aa).

6 residues coordinate Mn(2+): Asp-14, Asp-286, His-291, Asp-327, His-328, and His-339.

Belongs to the phosphopentomutase family. It depends on Mn(2+) as a cofactor.

It is found in the cytoplasm. It catalyses the reaction 2-deoxy-alpha-D-ribose 1-phosphate = 2-deoxy-D-ribose 5-phosphate. The catalysed reaction is alpha-D-ribose 1-phosphate = D-ribose 5-phosphate. It participates in carbohydrate degradation; 2-deoxy-D-ribose 1-phosphate degradation; D-glyceraldehyde 3-phosphate and acetaldehyde from 2-deoxy-alpha-D-ribose 1-phosphate: step 1/2. Functionally, isomerase that catalyzes the conversion of deoxy-ribose 1-phosphate (dRib-1-P) and ribose 1-phosphate (Rib-1-P) to deoxy-ribose 5-phosphate (dRib-5-P) and ribose 5-phosphate (Rib-5-P), respectively. This Staphylococcus aureus (strain Mu3 / ATCC 700698) protein is Phosphopentomutase.